A 109-amino-acid polypeptide reads, in one-letter code: Thioredoxin 1 (109 aa).

The 108-residue stretch at 2-109 (SDKIIHLTDD…LKEFLDANLA (108 aa)) folds into the Thioredoxin domain. Active-site nucleophile residues include cysteine 33 and cysteine 36. A disulfide bridge connects residues cysteine 33 and cysteine 36. The residue at position 70 (lysine 70) is an N6-acetyllysine.

This sequence belongs to the thioredoxin family. In terms of assembly, monomer.

In terms of biological role, participates in various redox reactions through the reversible oxidation of its active center dithiol to a disulfide and catalyzes dithiol-disulfide exchange reactions. The chain is Thioredoxin 1 (trxA) from Escherichia coli O157:H7.